We begin with the raw amino-acid sequence, 193 residues long: DNA dC-&gt;dU-editing enzyme APOBEC-3H (193 aa).

Residues 24–126 (YRRKTYLCYQ…WKYQQGLRHL (103 aa)) enclose the CMP/dCMP-type deaminase domain. His54 contacts Zn(2+). The active-site Proton donor is Glu56. Residues Cys85 and Cys88 each coordinate Zn(2+).

The protein belongs to the cytidine and deoxycytidylate deaminase family. In terms of assembly, homodimer. It depends on Zn(2+) as a cofactor. Expressed in peripheral blood mononuclear cells.

Its subcellular location is the cytoplasm. It catalyses the reaction a 2'-deoxycytidine in single-stranded DNA + H2O + H(+) = a 2'-deoxyuridine in single-stranded DNA + NH4(+). In terms of biological role, DNA deaminase (cytidine deaminase) which acts as an inhibitor of retrovirus replication and retrotransposon mobility via deaminase-dependent and -independent mechanisms. Selectively targets single-stranded DNA and does not deaminate double-stranded DNA or single- or double-stranded RNA. Exhibits single-stranded DNA deaminase activity (in vitro). Incorporates into the released virions of the virion infectivity factor (vif)-deficient feline immunodeficiency virus (FIV) and suppresses FIV infectivity, probably in a deaminase-dependent manner (in vitro). Induces G-to-A hypermutations in vif-deficient FIV (in vitro). The APOBEC3H/APOBEC3Z3 haplotype 5 exhibits antiviral activity against vif-proficient FIV, strains Petaluma, C36 and Shizuoka (in vitro). Does not exhibit inhibitory activity against feline leukemia virus (FeLV), feline endogenous retrovirus (RD-114 virus) or a long interspersed nuclear element-1 (LINE-1) retrotransposon (in vitro). In Felis catus (Cat), this protein is DNA dC-&gt;dU-editing enzyme APOBEC-3H.